The primary structure comprises 314 residues: Triplex capsid protein 2 (314 aa).

Belongs to the herpesviridae TRX2 protein family. As to quaternary structure, interacts with TRX1 and major capisd protein/MCP.

It localises to the virion. Its subcellular location is the host nucleus. In terms of biological role, structural component of the T=16 icosahedral capsid. The capsid is composed of pentamers and hexamers of major capsid protein/MCP, which are linked together by heterotrimers called triplexes. These triplexes are formed by a single molecule of triplex protein 1/TRX1 and two copies of triplex protein 2/TRX2. Additionally, TRX1 is required for efficient transport of TRX2 to the nucleus, which is the site of capsid assembly. The polypeptide is Triplex capsid protein 2 (Equine herpesvirus 1 (strain Ab4p) (EHV-1)).